Consider the following 120-residue polypeptide: Large ribosomal subunit protein uL18 (120 aa).

It belongs to the universal ribosomal protein uL18 family. As to quaternary structure, part of the 50S ribosomal subunit; part of the 5S rRNA/L5/L18/L25 subcomplex. Contacts the 5S and 23S rRNAs.

Its function is as follows. This is one of the proteins that bind and probably mediate the attachment of the 5S RNA into the large ribosomal subunit, where it forms part of the central protuberance. The polypeptide is Large ribosomal subunit protein uL18 (Bacillus cereus (strain AH820)).